The sequence spans 1715 residues: Rho guanine nucleotide exchange factor TIAM2 (1715 aa).

Composition is skewed to polar residues over residues 1 to 22 (MGNS…TVTG) and 218 to 229 (GSPSSQRPSPTD). Disordered stretches follow at residues 1–27 (MGNS…KQKP), 174–249 (FHNG…WYDS), 263–294 (SFLA…SSLS), and 385–418 (TGSL…NAEG). The N-myristoyl glycine moiety is linked to residue Gly2. Residues 235-245 (SKGSSLSSESS) are compositionally biased toward low complexity. Residues 395–411 (LQEPRSMEGSEYFDSHS) are compositionally biased toward basic and acidic residues. The region spanning 504 to 618 (VVRKAGWLFF…WVTAIHSACA (115 aa)) is the PH 1 domain. Residues 665 to 692 (PKNRKAIENQIRQWEQNLEKFHMDLFRM) are a coiled coil. The RBD domain occupies 831–902 (VQTYVHFQDN…YMQEQVYDEI (72 aa)). The PDZ domain occupies 911 to 997 (DVQLTKTGDM…GLTLVARPVT (87 aa)). Residues 1092–1113 (THTNSMEAPTESHDPPPRPLAR) form a disordered region. One can recognise a DH domain in the interval 1120 to 1314 (RLRKVIQELV…EKVASHINEM (195 aa)). The PH 2 domain occupies 1347–1478 (LLMHSTVSWL…KVIRSILREN (132 aa)). Positions 1515–1582 (SLKGLRTSSS…EGLAEFPDGL (68 aa)) are disordered. Residues 1522–1532 (SSSSEWPSEPS) show a composition bias toward low complexity. Residues 1533–1552 (KGNSLDSDECSLSSGTQSSG) are compositionally biased toward polar residues. Positions 1557 to 1572 (ESRRDSKSTELEKDAQ) are enriched in basic and acidic residues. Ser1604 is subject to Phosphoserine. Thr1662 bears the Phosphothreonine mark.

Belongs to the TIAM family. As to quaternary structure, interacts with MAP1A, MAP1B, PARP1 and YWHAE. Interacts with CD44, PARD3 and MAPK8IP2. Post-translationally, phosphorylated on serine and threonine residues. Phosphorylated on Thr-1662 by Rho-kinase. Its phosphorylation by Rho-kinase inhibits its guanine nucleotide exchange activity, its interaction with MAP1A, MAP1B, PARP1 and YWHAE and reduces its ability to promote neurite growth. Expressed in fetal brain (at protein level). Expressed in the olfactory bulb, cortical plate of the cerebral cortex, caudate putamen, hippocampus, ependymal cells of the lateral surface of the lateral ventricles of the brain. Weakly expressed in heart, lung, liver, skeletal muscle, kidney and testis.

Its subcellular location is the cytoplasm. The protein localises to the cell projection. The protein resides in the lamellipodium. It is found in the filopodium. It localises to the growth cone. Its subcellular location is the neuron projection. The protein localises to the perikaryon. Its function is as follows. Modulates the activity of RHO-like proteins and connects extracellular signals to cytoskeletal activities. Acts as a GDP-dissociation stimulator protein that stimulates the GDP-GTP exchange activity of RHO-like GTPases and activates them. Activates specifically RAC1, but not CDC42 and RHOA. Mediates extracellular laminin signals to activate Rac1, contributing to neurite growth. Involved in lamellipodial formation and advancement of the growth cone of embryonic hippocampal neurons. Promotes migration of neurons in the cerebral cortex. When overexpressed, induces membrane ruffling accompanied by the accumulation of actin filaments along the altered plasma membrane. In Mus musculus (Mouse), this protein is Rho guanine nucleotide exchange factor TIAM2.